Reading from the N-terminus, the 266-residue chain is Killer cell lectin-like receptor 8 (266 aa).

Residues 1-44 (MSEQEVTFPTMRFHKSSGLNSQVRLEGTQRSRKAGLRVCSVPWQ) lie on the Cytoplasmic side of the membrane. Residues 45-66 (LIVIALGILCSLRLVIVAVFVT) traverse the membrane as a helical; Signal-anchor for type II membrane protein segment. Residues 67-266 (KFFQYSQHKQ…CGKKLDKFPD (200 aa)) are Extracellular-facing. Residues N87 and N104 are each glycosylated (N-linked (GlcNAc...) asparagine). The region spanning 143–261 (GVKYWFCYGT…PYYCICGKKL (119 aa)) is the C-type lectin domain. 4 disulfides stabilise this stretch: C149–C154, C167–C255, C171–C257, and C236–C249.

In terms of assembly, homodimer; disulfide-linked. Interacts with the adapter protein TYROBP/DAP12; the interaction leads to natural killer cell activation.

It is found in the cell membrane. Its function is as follows. Receptor on natural killer (NK) cells for class I MHC. This Mus musculus (Mouse) protein is Killer cell lectin-like receptor 8 (Klra8).